A 573-amino-acid polypeptide reads, in one-letter code: Probable cytochrome c oxidase subunit 1 (573 aa).

Residues 40 to 60 form a helical membrane-spanning segment; that stretch reads IGIMYCVACISFFFIGGLLAL. H86 contributes to the Fe(II)-heme a binding site. 6 consecutive transmembrane segments (helical) span residues 89 to 109, 121 to 141, 170 to 190, 213 to 233, 258 to 278, and 290 to 310; these read IMLLFYATPIVFGFANLVLPL, LNAFSFWLFVFGATIGAAGFI, LWIMGLIVAGLGTILGAVNMI, IMVTSILILIAFPLLTAALFG, LFWFFGHPEVYIIALPFFGIV, and IFGYTTLVYATLSIAALSVAV. Cu cation contacts are provided by H264 and Y268. The 1'-histidyl-3'-tyrosine (His-Tyr) cross-link spans 264–268; the sequence is HPEVY. 2 residues coordinate Cu cation: H313 and H314. A run of 2 helical transmembrane segments spans residues 315 to 335 and 359 to 379; these read MFATGAVLLPFFSFMTYLIAV and MLFSVGFMVTFLLGGLTGVLL. H397 is a binding site for heme a3. The next 3 membrane-spanning stretches (helical) occupy residues 398–418, 433–453, and 476–496; these read FHYVLFGTIVFATFAGIYFWF, LHFWLTFIGFHTTFLVQHWLG, and VSTIGAFILGASMFPFVWNVF. H399 is a binding site for Fe(II)-heme a.

This sequence belongs to the heme-copper respiratory oxidase family.

The protein localises to the cell membrane. It carries out the reaction 4 Fe(II)-[cytochrome c] + O2 + 8 H(+)(in) = 4 Fe(III)-[cytochrome c] + 2 H2O + 4 H(+)(out). It participates in energy metabolism; oxidative phosphorylation. In terms of biological role, cytochrome c oxidase is the component of the respiratory chain that catalyzes the reduction of oxygen to water. Subunits 1-3 form the functional core of the enzyme complex. CO I is the catalytic subunit of the enzyme. Electrons originating in cytochrome c are transferred via the copper A center of subunit 2 and heme A of subunit 1 to the bimetallic center formed by heme A3 and copper B. The chain is Probable cytochrome c oxidase subunit 1 (ctaD) from Mycobacterium bovis (strain ATCC BAA-935 / AF2122/97).